The following is a 1781-amino-acid chain: BCL-6 corepressor-like protein 1 (1781 aa).

Disordered stretches follow at residues 64–136 and 337–362; these read AVGS…SHSR and ASTP…GPPS. Polar residues-rich tracts occupy residues 66–82 and 127–136; these read GSGS…NTTE and PDSTEASHSR. Ser490 is modified (phosphoserine). The segment covering 521-531 has biased composition (low complexity); the sequence is SCTSPSSSTNS. Disordered regions lie at residues 521-545, 561-616, 733-777, 869-895, and 933-960; these read SCTS…LADT, LLPA…EMPL, NRDP…STVK, PLGS…PEQD, and QPSS…TPKM. Positions 581–594 are enriched in polar residues; it reads TDQQTEGTSVTFSP. Phosphoserine is present on residues Ser593 and Ser607. Lys741 is covalently cross-linked (Glycyl lysine isopeptide (Lys-Gly) (interchain with G-Cter in SUMO2)). Ser1024 carries the post-translational modification Phosphoserine. Residue Lys1087 forms a Glycyl lysine isopeptide (Lys-Gly) (interchain with G-Cter in SUMO2) linkage. Positions 1100–1484 are disordered; it reads WQPDEETESL…PTARQIPPEA (385 aa). Residues 1116-1127 are compositionally biased toward basic and acidic residues; it reads CNKEKEIEEEPR. At Ser1162 the chain carries Phosphoserine. Residues 1176–1185 are compositionally biased toward basic residues; it reads VRGKHKHRKP. The segment covering 1195-1213 has biased composition (basic and acidic residues); it reads KRTDGHEEGSLEKKAKNSF. Positions 1222-1234 are enriched in polar residues; that stretch reads STRTRSQSGSICS. 2 stretches are compositionally biased toward basic and acidic residues: residues 1271–1284 and 1297–1307; these read TQRD…HAQD and RAREMPWRTEA. The segment covering 1314–1324 has biased composition (acidic residues); that stretch reads TNEEEEDDEEE. The segment covering 1328–1339 has biased composition (basic residues); sequence KRKKRRRQKSRK. Basic and acidic residues predominate over residues 1350-1362; it reads EEQRRKGRADSKA. Polar residues-rich tracts occupy residues 1381–1394 and 1437–1449; these read LLLS…SDSP and RWSQ…SKSP. ANK repeat units follow at residues 1493 to 1523, 1527 to 1556, and 1560 to 1589; these read AGET…DVNH, AGYT…NVNC, and DGTR…DPTL. The PCGF Ub-like fold domain (PUFD); required for the interaction with the KDM2B-SKP1 heterodimeric complex stretch occupies residues 1664 to 1781; sequence DDFMFELSDK…SEVEYQSWSS (118 aa).

This sequence belongs to the BCOR family. In terms of assembly, interacts with PCGF1, forming heterodimers. The PCGF1-BCORL1 heterodimeric complex interacts with the KDM2B-SKP1 heterodimeric complex to form a homotetrameric polycomb repression complex 1 (PRC1.1). Interacts with SKP1. Interacts with CTBP1, HDAC4, HDAC5 and HDAC7. As to expression, highly expressed in lung and testis.

The protein resides in the nucleus. In terms of biological role, transcriptional corepressor. May specifically inhibit gene expression when recruited to promoter regions by sequence specific DNA-binding proteins such as BCL6. This repression may be mediated at least in part by histone deacetylase activities which can associate with this corepressor. This chain is BCL-6 corepressor-like protein 1 (Bcorl1), found in Mus musculus (Mouse).